We begin with the raw amino-acid sequence, 419 residues long: Creatine kinase S-type, mitochondrial (419 aa).

A mitochondrion-targeting transit peptide spans 1 to 39; the sequence is MASAFSKLLTGRNASLLFTTLGTSALTTGYLLNRQKVSA. A cardiolipin-binding region spans residues 40–64; it reads DAREQHKLFPPSADYPDLRKHNNCM. Residues 46-132 enclose the Phosphagen kinase N-terminal domain; the sequence is KLFPPSADYP…FDPVIKLRHN (87 aa). The Phosphagen kinase C-terminal domain occupies 159–401; it reads YVLSSRVRTG…NYLVDCEKKL (243 aa). ATP is bound by residues 162 to 166 and H225; that span reads SSRVR. Y255 carries the post-translational modification Phosphotyrosine. ATP-binding positions include R270, R326, 354–359, and D369; that span reads RGTGGV. T356 carries the post-translational modification Phosphothreonine.

It belongs to the ATP:guanido phosphotransferase family. Exists as an octamer composed of four CKMT2 homodimers.

It localises to the mitochondrion inner membrane. It carries out the reaction creatine + ATP = N-phosphocreatine + ADP + H(+). Reversibly catalyzes the transfer of phosphate between ATP and various phosphogens (e.g. creatine phosphate). Creatine kinase isoenzymes play a central role in energy transduction in tissues with large, fluctuating energy demands, such as skeletal muscle, heart, brain and spermatozoa. This chain is Creatine kinase S-type, mitochondrial (Ckmt2), found in Mus musculus (Mouse).